The following is a 502-amino-acid chain: L-arabinose isomerase (502 aa).

Mn(2+) is bound by residues Glu-307, Glu-334, His-351, and His-450.

It belongs to the arabinose isomerase family. The cofactor is Mn(2+).

It catalyses the reaction beta-L-arabinopyranose = L-ribulose. It participates in carbohydrate degradation; L-arabinose degradation via L-ribulose; D-xylulose 5-phosphate from L-arabinose (bacterial route): step 1/3. In terms of biological role, catalyzes the conversion of L-arabinose to L-ribulose. The protein is L-arabinose isomerase of Nocardioides sp. (strain ATCC BAA-499 / JS614).